A 207-amino-acid polypeptide reads, in one-letter code: Dephospho-CoA kinase (207 aa).

The region spanning 12–207 (LIGITGMIGG…LYSTLLGKML (196 aa)) is the DPCK domain. 20–25 (GGGKST) lines the ATP pocket.

It belongs to the CoaE family.

It localises to the cytoplasm. The enzyme catalyses 3'-dephospho-CoA + ATP = ADP + CoA + H(+). It functions in the pathway cofactor biosynthesis; coenzyme A biosynthesis; CoA from (R)-pantothenate: step 5/5. Functionally, catalyzes the phosphorylation of the 3'-hydroxyl group of dephosphocoenzyme A to form coenzyme A. This Leptospira interrogans serogroup Icterohaemorrhagiae serovar Lai (strain 56601) protein is Dephospho-CoA kinase.